The primary structure comprises 239 residues: tRNA (guanine-N(7)-)-methyltransferase (239 aa).

The S-adenosyl-L-methionine site is built by E69, E94, D121, and D144. D144 is an active-site residue. Residues K148, D180, and 217-220 (TNFE) each bind substrate.

The protein belongs to the class I-like SAM-binding methyltransferase superfamily. TrmB family. In terms of assembly, monomer.

The catalysed reaction is guanosine(46) in tRNA + S-adenosyl-L-methionine = N(7)-methylguanosine(46) in tRNA + S-adenosyl-L-homocysteine. The protein operates within tRNA modification; N(7)-methylguanine-tRNA biosynthesis. Functionally, catalyzes the formation of N(7)-methylguanine at position 46 (m7G46) in tRNA. The sequence is that of tRNA (guanine-N(7)-)-methyltransferase from Buchnera aphidicola subsp. Schizaphis graminum (strain Sg).